We begin with the raw amino-acid sequence, 107 residues long: uncharacterized protein (107 aa).

2 helical membrane passes run 11–31 and 58–78; these read CVNFVIIIGIPLLIEASILCI and LFFLSFYMLHFPITLSILAFQ.

The protein localises to the mitochondrion membrane. This is an uncharacterized protein from Saccharomyces cerevisiae (strain ATCC 204508 / S288c) (Baker's yeast).